The following is a 338-amino-acid chain: Ornithine carbamoyltransferase, catabolic (338 aa).

Carbamoyl phosphate-binding positions include 65–68 (STRT), Gln-92, Arg-116, and 143–146 (HPTQ). Residues Asn-175, Asp-239, and 243–244 (SM) each bind L-ornithine. Carbamoyl phosphate contacts are provided by residues 280–281 (CL) and Arg-325.

This sequence belongs to the aspartate/ornithine carbamoyltransferase superfamily. OTCase family.

It is found in the cytoplasm. It catalyses the reaction carbamoyl phosphate + L-ornithine = L-citrulline + phosphate + H(+). Its pathway is amino-acid degradation; L-arginine degradation via ADI pathway; carbamoyl phosphate from L-arginine: step 2/2. Reversibly catalyzes the transfer of the carbamoyl group from carbamoyl phosphate (CP) to the N(epsilon) atom of ornithine (ORN) to produce L-citrulline. This is Ornithine carbamoyltransferase, catabolic from Treponema denticola (strain ATCC 35405 / DSM 14222 / CIP 103919 / JCM 8153 / KCTC 15104).